A 585-amino-acid chain; its full sequence is MGSLKDELLKGIWHAFTALDLDHSGKVSKSQLKVLSHNLCTVLKVPHDPVALEEHFRDDDEGPVSNQGYMPYLNKFILEKVQDNFDKIEFNRMCWTLCVKKNLTKNPLFITEEDAFKIWVIFNFLSEDKYPLIIVPEEIEYLLKKLTEAMGVSWQQEQFENYKINFDDSKDGLSAWELIELVGNGQFSKGMDRQTVSMAINEVFNELILDVLKQGYMIKKGHRRKNWTERWFVLKPHIISYYVSEDLKDKKGDILLDENCCVESLPDKDGKKCLFLIKCFDKTFEISASDKKKKQEWIQAIHSTIHLLKLGSPPPHKEARQRRKELRKKLLAEQEELERQMKELQIANENKQQELEAVRKKLEEAASRAAEEEKKRLQTQVELQARFSTELEREKLIRQQMEEQVAQKSSELEQYLQRVRELEDMYLKLQEALEDERQARQDEETVRKLQARLLEEESSKRAELEKWHLEQQQAIQTTEAEKQELENQRVIKEQALQEALEQLQQLELERKQALEQYEGVKKKLEMAAKMTKSWKDKVAHHEGLIRLIEPGSKNAHLITNWGPAAFTQAELEERQKSWKEKKTTE.

The PH domain occupies 210 to 306; the sequence is DVLKQGYMIK…WIQAIHSTIH (97 aa). Residues 316–532 adopt a coiled-coil conformation; the sequence is HKEARQRRKE…KLEMAAKMTK (217 aa).

In terms of assembly, the SWAP complex consists of NPM1, NCL, PARP1 and SWAP70. Tyrosine-phosphorylated.

Its subcellular location is the cytoplasm. It localises to the cell membrane. The protein resides in the nucleus. It is found in the cell projection. The protein localises to the lamellipodium. Functionally, phosphatidylinositol 3,4,5-trisphosphate-dependent guanine nucleotide exchange factor (GEF) which, independently of RAS, transduces signals from tyrosine kinase receptors to RAC. It also mediates signaling of membrane ruffling. Regulates the actin cytoskeleton as an effector or adapter protein in response to agonist stimulated phosphatidylinositol (3,4)-bisphosphate production and cell protrusion. This is Switch-associated protein 70 (SWAP70) from Bos taurus (Bovine).